A 240-amino-acid chain; its full sequence is Phosphoenolpyruvate guanylyltransferase (240 aa).

Thr161, Gly178, and Ser181 together coordinate phosphoenolpyruvate.

Belongs to the CofC family.

The catalysed reaction is phosphoenolpyruvate + GTP + H(+) = enolpyruvoyl-2-diphospho-5'-guanosine + diphosphate. It participates in cofactor biosynthesis; coenzyme F420 biosynthesis. Functionally, guanylyltransferase that catalyzes the activation of phosphoenolpyruvate (PEP) as enolpyruvoyl-2-diphospho-5'-guanosine, via the condensation of PEP with GTP. It is involved in the biosynthesis of coenzyme F420, a hydride carrier cofactor. The protein is Phosphoenolpyruvate guanylyltransferase of Rhodococcus opacus (strain B4).